Here is a 298-residue protein sequence, read N- to C-terminus: Apolipoprotein E (298 aa).

The first 18 residues, 1–18, serve as a signal peptide directing secretion; it reads MKVLWAALVVTLLAGCRA. A run of 8 repeats spans residues 74-94, 95-116, 117-138, 139-160, 161-182, 183-203, 204-221, and 222-243. Residues 95–243 form an 8 X 22 AA approximate tandem repeats region; the sequence is GPVAEDTKAR…DRLEEVREQM (149 aa). A Methionine sulfoxide modification is found at Met-137. The residue at position 141 (Ser-141) is a Phosphoserine. The LDL and other lipoprotein receptors binding stretch occupies residues 151–161; the sequence is SHLRKMRKRLQ. 155–158 contacts heparin; it reads KMRK. Residues 203–271 form a lipid-binding and lipoprotein association region; the sequence is QALTSQPLQE…KSWFEPMMED (69 aa). 217 to 224 serves as a coordination point for heparin; it reads WGEQMRGR. A specificity for association with VLDL region spans residues 259 to 271; that stretch reads ARLKSWFEPMMED.

Belongs to the apolipoprotein A1/A4/E family. Homotetramer. May interact with ABCA1; functionally associated with ABCA1 in the biogenesis of HDLs. May interact with APP/A4 amyloid-beta peptide; the interaction is extremely stable in vitro but its physiological significance is unclear. May interact with MAPT. May interact with MAP2. In the cerebrospinal fluid, interacts with secreted SORL1. Interacts with PMEL; this allows the loading of PMEL luminal fragment on ILVs to induce fibril nucleation. APOE exists as multiple glycosylated and sialylated glycoforms within cells and in plasma. The extent of glycosylation and sialylation are tissue and context specific. Post-translationally, glycated in plasma VLDL. In terms of processing, phosphorylated by FAM20C in the extracellular medium.

It is found in the secreted. It localises to the extracellular space. The protein localises to the extracellular matrix. The protein resides in the extracellular vesicle. Its subcellular location is the endosome. It is found in the multivesicular body. Functionally, APOE is an apolipoprotein, a protein associating with lipid particles, that mainly functions in lipoprotein-mediated lipid transport between organs via the plasma and interstitial fluids. APOE is a core component of plasma lipoproteins and is involved in their production, conversion and clearance. Apolipoproteins are amphipathic molecules that interact both with lipids of the lipoprotein particle core and the aqueous environment of the plasma. As such, APOE associates with chylomicrons, chylomicron remnants, very low density lipoproteins (VLDL) and intermediate density lipoproteins (IDL) but shows a preferential binding to high-density lipoproteins (HDL). It also binds a wide range of cellular receptors including the LDL receptor/LDLR, the LDL receptor-related proteins LRP1, LRP2 and LRP8 and the very low-density lipoprotein receptor/VLDLR that mediate the cellular uptake of the APOE-containing lipoprotein particles. Finally, APOE also has a heparin-binding activity and binds heparan-sulfate proteoglycans on the surface of cells, a property that supports the capture and the receptor-mediated uptake of APOE-containing lipoproteins by cells. A main function of APOE is to mediate lipoprotein clearance through the uptake of chylomicrons, VLDLs, and HDLs by hepatocytes. APOE is also involved in the biosynthesis by the liver of VLDLs as well as their uptake by peripheral tissues ensuring the delivery of triglycerides and energy storage in muscle, heart and adipose tissues. By participating in the lipoprotein-mediated distribution of lipids among tissues, APOE plays a critical role in plasma and tissues lipid homeostasis. APOE is also involved in two steps of reverse cholesterol transport, the HDLs-mediated transport of cholesterol from peripheral tissues to the liver, and thereby plays an important role in cholesterol homeostasis. First, it is functionally associated with ABCA1 in the biogenesis of HDLs in tissues. Second, it is enriched in circulating HDLs and mediates their uptake by hepatocytes. APOE also plays an important role in lipid transport in the central nervous system, regulating neuron survival and sprouting. In Cavia tschudii (Montane guinea pig), this protein is Apolipoprotein E (APOE).